Reading from the N-terminus, the 261-residue chain is tRNA pseudouridine synthase A (261 aa).

D51 serves as the catalytic Nucleophile. Y109 is a substrate binding site.

This sequence belongs to the tRNA pseudouridine synthase TruA family. As to quaternary structure, homodimer.

The enzyme catalyses uridine(38/39/40) in tRNA = pseudouridine(38/39/40) in tRNA. Its function is as follows. Formation of pseudouridine at positions 38, 39 and 40 in the anticodon stem and loop of transfer RNAs. The polypeptide is tRNA pseudouridine synthase A (Shewanella sp. (strain W3-18-1)).